Reading from the N-terminus, the 442-residue chain is MTATLKKPPIYKVLYFQVLTAVVIGVLLGHFYPSLGVDMKPFGDAFIKGIKMLIAPIIFCTVVLGIAGMEDMKKVGKTGGLALLYFEIVSTIALMVGLVVVNVLQPGAGMNIDPASLDTKGIAAYTGPGKMGTTTEFLLNIIPSSAVDAFAKGEILQVLFIAILFGFALHKFGGRGTMVFDLIEKTSHVLFDMIAIIMKFAPIGAFGAMAFTIGKYGIGSLFSLGKLMGSFYLTCLLFVFIVLGIIARLNGFNIFKFVRYIKEELLIVLGTSSSESVLPRMMEKMELLGAKKACVGLVIPTGYSFNLDGTSIYLTMAAVFIAQATNTPMTLLQEVTLLAVLLLTSKGAAGVTGSGFIVLAATLSAVGDVPVAGLAIILGIDRFMSEARALTNLVGNGVATIVVAKWTGELDQKQLTRALNRDDWIEAQEPEMILDHQQDKMR.

9 consecutive transmembrane segments (helical) span residues 13-33, 49-69, 81-101, 149-169, 193-213, 227-247, 312-332, 336-356, and 357-377; these read VLYF…HFYP, GIKM…IAGM, LALL…LVVV, AFAK…GFAL, MIAI…AFTI, LMGS…GIIA, IYLT…MTLL, TLLA…GSGF, and IVLA…LAII.

Belongs to the dicarboxylate/amino acid:cation symporter (DAACS) (TC 2.A.23) family.

It is found in the cell membrane. Its function is as follows. Responsible for the transport of dicarboxylates such as succinate, fumarate, and malate across the membrane. The polypeptide is C4-dicarboxylate transport protein (Polynucleobacter asymbioticus (strain DSM 18221 / CIP 109841 / QLW-P1DMWA-1) (Polynucleobacter necessarius subsp. asymbioticus)).